The following is a 212-amino-acid chain: Probable GTP-binding protein EngB (212 aa).

The 173-residue stretch at 40–212 (SLPEIAFVGK…KASLAKCIKA (173 aa)) folds into the EngB-type G domain. GTP contacts are provided by residues 48 to 55 (GKSNVGKS), 75 to 79 (GRTRQ), 93 to 96 (DLPG), 160 to 163 (TKSD), and 191 to 193 (VSS). Mg(2+) is bound by residues Ser-55 and Thr-77.

This sequence belongs to the TRAFAC class TrmE-Era-EngA-EngB-Septin-like GTPase superfamily. EngB GTPase family. Mg(2+) is required as a cofactor.

Necessary for normal cell division and for the maintenance of normal septation. In Rickettsia akari (strain Hartford), this protein is Probable GTP-binding protein EngB.